The following is a 78-amino-acid chain: UPF0349 protein SSP1836 (78 aa).

Belongs to the UPF0349 family.

In Staphylococcus saprophyticus subsp. saprophyticus (strain ATCC 15305 / DSM 20229 / NCIMB 8711 / NCTC 7292 / S-41), this protein is UPF0349 protein SSP1836.